The primary structure comprises 46 residues: Photosystem II reaction center protein Psb30 (46 aa).

At methionine 1 the chain carries N-formylmethionine. Residues 1–20 (MGIFNGIIEFLSNINFEVIA) lie on the Lumenal side of the membrane. A helical membrane pass occupies residues 21-38 (QLTMIAMIGIAGPMIIFL). Over 39–46 (LAVRRGNL) the chain is Cytoplasmic.

The protein belongs to the Psb30/Ycf12 family. In terms of assembly, PSII is composed of 1 copy each of membrane proteins PsbA, PsbB, PsbC, PsbD, PsbE, PsbF, PsbH, PsbI, PsbJ, PsbK, PsbL, PsbM, PsbT, PsbX, PsbY, PsbZ, Psb30/Ycf12, peripheral proteins PsbO, CyanoQ (PsbQ), PsbU, PsbV and a large number of cofactors. It forms dimeric complexes. Part of a photosystem II (PSII) assembly intermediate complex PSII-I; crystallized from a strain deleted of psbJ, it forms monomeric PSII before addition of the oxygen evolving complex. PSII-I includes 3 assembly factors not found in mature PSII (Psb27, Psb28 and Psb34). PSII binds multiple chlorophylls, carotenoids and specific lipids. serves as cofactor.

The protein resides in the cellular thylakoid membrane. Functionally, a core subunit of photosystem II (PSII). PSII is a light-driven water plastoquinone oxidoreductase, using light energy to abstract electrons from H(2)O, generating a proton gradient subsequently used for ATP formation. Helps stabilize PSII. The chain is Photosystem II reaction center protein Psb30 from Thermosynechococcus vestitus (strain NIES-2133 / IAM M-273 / BP-1).